Reading from the N-terminus, the 388-residue chain is MSVIAILAMVVGVQAELKQINVIFRHGDRIPDEKNEMYPKDPYLYYDFYPLERGELTNSGKMREYQLGQFLRERYGDFLGDIYTEESVSALSSFYDRTKMSLQLVLAALYPPNKLQQWNEDLNWQPIATKYLRRYEDNIFLPEDCLLFTIELDRVLESPRGKYEFSKYDKLKKKLEEWTGKNITTPWDYYYIYHTLVAEQSYGLTLPSWTNNIFPRGELFDATVFTYNITNSTPLLKKLYGGPLLRIFTKHMLDVVSGTQKKKRKIYLFSGHESNIASVLHALQLYYPHVPEYSSSIIMELHNIEGTHYVKIVYYLGIPSEARELQLPGCEVLCPLYKYLQLIENVIPSNEELICDKRFVDESANNLSIEELDFVKLNLIRIAGTENK.

A signal peptide spans 1 to 15 (MSVIAILAMVVGVQA). Residue His-26 is the Nucleophile of the active site. Disulfide bonds link Cys-145–Cys-355 and Cys-330–Cys-334. N-linked (GlcNAc...) asparagine glycosylation is found at Asn-182 and Asn-228. Catalysis depends on Glu-273, which acts as the Proton donor. Asn-366 carries N-linked (GlcNAc...) asparagine glycosylation.

The protein belongs to the histidine acid phosphatase family. As to expression, expressed by the venom gland.

The protein resides in the secreted. The catalysed reaction is a phosphate monoester + H2O = an alcohol + phosphate. The polypeptide is Venom acid phosphatase Acph-1 (Apis mellifera (Honeybee)).